Reading from the N-terminus, the 28-residue chain is Ranatuerin-2AVb (28 aa).

Residues Cys-23 and Cys-28 are joined by a disulfide bond.

Expressed by the skin glands.

The protein resides in the secreted. Its function is as follows. Has antibacterial activity. This Rana arvalis (Moor frog) protein is Ranatuerin-2AVb.